The chain runs to 379 residues: Probable tRNA sulfurtransferase (379 aa).

A THUMP domain is found at 52–157 (DEFLDKLKFI…RHHAFVFCKI (106 aa)). ATP contacts are provided by residues 175-176 (LL), Arg257, Gly279, and Gln288.

It belongs to the ThiI family.

The protein resides in the cytoplasm. The enzyme catalyses [ThiI sulfur-carrier protein]-S-sulfanyl-L-cysteine + a uridine in tRNA + 2 reduced [2Fe-2S]-[ferredoxin] + ATP + H(+) = [ThiI sulfur-carrier protein]-L-cysteine + a 4-thiouridine in tRNA + 2 oxidized [2Fe-2S]-[ferredoxin] + AMP + diphosphate. It carries out the reaction [ThiS sulfur-carrier protein]-C-terminal Gly-Gly-AMP + S-sulfanyl-L-cysteinyl-[cysteine desulfurase] + AH2 = [ThiS sulfur-carrier protein]-C-terminal-Gly-aminoethanethioate + L-cysteinyl-[cysteine desulfurase] + A + AMP + 2 H(+). It functions in the pathway cofactor biosynthesis; thiamine diphosphate biosynthesis. Functionally, catalyzes the ATP-dependent transfer of a sulfur to tRNA to produce 4-thiouridine in position 8 of tRNAs, which functions as a near-UV photosensor. Also catalyzes the transfer of sulfur to the sulfur carrier protein ThiS, forming ThiS-thiocarboxylate. This is a step in the synthesis of thiazole, in the thiamine biosynthesis pathway. The sulfur is donated as persulfide by IscS. In Mycoplasmopsis pulmonis (strain UAB CTIP) (Mycoplasma pulmonis), this protein is Probable tRNA sulfurtransferase.